A 775-amino-acid chain; its full sequence is GRIP and coiled-coil domain-containing protein 1 (775 aa).

The stretch at 13 to 61 (SKKDLLETIETQKKQLLQYQARLKDVVRAYKSLLKEKEALEASIKVLSV) forms a coiled coil. Residues 84 to 93 (DDRCSTHSED) show a composition bias toward basic and acidic residues. 2 disordered regions span residues 84-153 (DDRC…AGGE) and 614-639 (GLPG…SDSL). Low complexity-rich tracts occupy residues 94 to 110 (STGT…LTST), 133 to 147 (ASWS…SGDG), and 629 to 638 (DPADTSSSDS). Positions 153-763 (EVDKRLHQLK…PEEKQVIMRL (611 aa)) form a coiled coil. Positions 713 to 763 (QSREGANLEYLKNIIYRFLTLPDSLGRQQTLTAILTILHFSPEEKQVIMRL) constitute a GRIP domain.

It is found in the cytoplasm. Its subcellular location is the golgi apparatus membrane. Its function is as follows. Probably involved in maintaining Golgi structure. The polypeptide is GRIP and coiled-coil domain-containing protein 1 (GCC1) (Homo sapiens (Human)).